Here is a 354-residue protein sequence, read N- to C-terminus: Abasic site processing protein HMCES (354 aa).

C2 serves as the catalytic Nucleophile. C2 is subject to Thiazolidine linkage to a ring-opened DNA abasic site. Residue E127 is part of the active site. Glycyl lysine isopeptide (Lys-Gly) (interchain with G-Cter in SUMO2) cross-links involve residues K148 and K151. The residue at position 160 (S160) is a Phosphoserine. Residue K276 forms a Glycyl lysine isopeptide (Lys-Gly) (interchain with G-Cter in SUMO2) linkage. A disordered region spans residues 292–354; that stretch reads ATKSPKKEDS…EPVAKRPYSQ (63 aa). S295 carries the post-translational modification Phosphoserine. Over residues 296–309 the composition is skewed to basic and acidic residues; sequence PKKEDSKTPQKEES. Residue K306 forms a Glycyl lysine isopeptide (Lys-Gly) (interchain with G-Cter in SUMO2) linkage. At S322 the chain carries Phosphoserine. The PIP-box signature appears at 332 to 338; that stretch reads GLLEQWL. Basic and acidic residues predominate over residues 337 to 348; that stretch reads WLKREKEEEPVA. Residues K339 and K342 each participate in a glycyl lysine isopeptide (Lys-Gly) (interchain with G-Cter in SUMO2) cross-link.

Belongs to the SOS response-associated peptidase family. As to quaternary structure, interacts (via PIP-box motif) with PCNA. Ubiquitinated; the covalent HMCES DNA-protein cross-link is ubiquitinated, leading to its degradation by the proteasome.

The protein localises to the chromosome. Formation and reversal of DNA-protein cross-link depends on DNA context. Catalyzes formation of the thiazolidine linkage in presence of abasic sites in single-stranded DNA. Mediates the reversal of the thiazolidine cross-link in presence of double stranded DNA. Sensor of abasic sites in single-stranded DNA (ssDNA) required to preserve genome integrity by promoting error-free repair of abasic sites. Acts as an enzyme that recognizes and binds abasic sites in ssDNA at replication forks and chemically modifies the lesion by forming a covalent cross-link with DNA: forms a stable thiazolidine linkage between a ring-opened abasic site and the alpha-amino and sulfhydryl substituents of its N-terminal catalytic cysteine residue. Promotes error-free repair by protecting abasic sites from translesion synthesis (TLS) polymerases and endonucleases that are error-prone and would generate mutations and double-strand breaks. The HMCES DNA-protein cross-link is then either reversed or degraded. HMCES is able to catalyze the reversal of its thiazolidine cross-link and cycle between a cross-link and a non-cross-linked state depending on DNA context: mediates self-reversal of the thiazolidine cross-link in double stranded DNA, allowing APEX1 to initiate downstream repair of abasic sites. The HMCES DNA-protein cross-link can also be degraded by the SPRTN metalloprotease following unfolding by the BRIP1/FANCJ helicase. Has preference for ssDNA, but can also accommodate double-stranded DNA with 3' or 5' overhang (dsDNA), and dsDNA-ssDNA 3' junction. Plays a protective role during somatic hypermutation of immunoglobulin genes in B-cells: acts via its ability to form covalent cross-links with abasic sites, thereby limiting the accumulation of deletions in somatic hypermutation target regions. Also involved in class switch recombination (CSR) in B-cells independently of the formation of a DNA-protein cross-link: acts by binding and protecting ssDNA overhangs to promote DNA double-strand break repair through the microhomology-mediated alternative-end-joining (Alt-EJ) pathway. Acts as a protease: mediates autocatalytic processing of its N-terminal methionine in order to expose the catalytic cysteine. The chain is Abasic site processing protein HMCES from Pongo abelii (Sumatran orangutan).